Here is a 387-residue protein sequence, read N- to C-terminus: Signal-regulatory protein gamma (387 aa).

The signal sequence occupies residues 1 to 28 (MPVPASWPHPPGPFLLLTLLLGLTEVAG). The region spanning 29 to 137 (EEELQMIQPE…ENVEFKSGPG (109 aa)) is the Ig-like V-type domain. The Extracellular portion of the chain corresponds to 29–360 (EEELQMIQPE…QKDQSSDATP (332 aa)). Cystine bridges form between Cys53/Cys119 and Cys168/Cys226. Ig-like C1-type domains are found at residues 146 to 245 (PSAP…ANLS) and 252 to 340 (PTLE…LAVS). Asn243, Asn268, Asn309, and Asn317 each carry an N-linked (GlcNAc...) asparagine glycan. An intrachain disulfide couples Cys271 to Cys329. Residues 361-383 (GPASSLTALLLIAVLLGPIYVPW) form a helical membrane-spanning segment. Topologically, residues 384–387 (KQKT) are cytoplasmic.

As to quaternary structure, interacts with CD47. As to expression, detected in liver, and at very low levels in brain, heart, lung, pancreas, kidney, placenta and skeletal muscle. Expressed on CD4+ T-cells, CD8+ T-cells, CD56-bright natural killer (NK) cells, CD20+ cells, and all activated NK cells. Mainly present in the paracortical T-cell area of lymph nodes, with only sparse positive cells in the mantle and in the germinal center of B-cell follicles. In the thymus, primarily expressed in the medulla on mature T-lymphocytes that have undergone thymic selection.

Its subcellular location is the membrane. Its function is as follows. Probable immunoglobulin-like cell surface receptor. On binding with CD47, mediates cell-cell adhesion. Engagement on T-cells by CD47 on antigen-presenting cells results in enhanced antigen-specific T-cell proliferation and costimulates T-cell activation. The protein is Signal-regulatory protein gamma (SIRPG) of Homo sapiens (Human).